Reading from the N-terminus, the 719-residue chain is Serine/threonine-protein kinase CBK1 (719 aa).

Disordered stretches follow at residues 1 to 75 (MFGQ…GAGF) and 100 to 219 (MQQQ…QTSG). The segment covering 24–38 (QFSSAYMEQQGSHQS) has biased composition (polar residues). The span at 40-63 (QEHLAYEQLQLQQQQQQQQQHAAA) shows a compositional bias: low complexity. Polar residues-rich tracts occupy residues 112–130 (ATSI…NDTT), 139–157 (GHYS…SSAY), and 181–219 (GDQT…QTSG). Residues 310–631 (FHTVKVIGKG…ANEIKNHPFF (322 aa)) form the Protein kinase domain. Residues 316-324 (IGKGAFGEV) and K339 contribute to the ATP site. D433 serves as the catalytic Proton acceptor. The 86-residue stretch at 632–717 (RGVDWETIRQ…SRFDYLTRKN (86 aa)) folds into the AGC-kinase C-terminal domain.

It belongs to the protein kinase superfamily. STE Ser/Thr protein kinase family. COT1 subfamily.

It carries out the reaction L-seryl-[protein] + ATP = O-phospho-L-seryl-[protein] + ADP + H(+). The enzyme catalyses L-threonyl-[protein] + ATP = O-phospho-L-threonyl-[protein] + ADP + H(+). In terms of biological role, protein kinase that seems to play a role in the regulation of cell morphogenesis and proliferation. The chain is Serine/threonine-protein kinase CBK1 (CBK1) from Eremothecium gossypii (strain ATCC 10895 / CBS 109.51 / FGSC 9923 / NRRL Y-1056) (Yeast).